The chain runs to 558 residues: Phosphatidylserine lipase ABHD16A (558 aa).

2 consecutive transmembrane segments (helical) span residues 60-80 (ILALASVFWSISYYSSPFAFF) and 93-113 (VVPFSHYAGTLLLLLAGVACL). The Cytoplasmic segment spans residues 114-558 (RGIGRWTNPQ…AQNFQMPWHL (445 aa)). An AB hydrolase-1 domain is found at 281-407 (LVICCEGNAG…LVTRTVRQHL (127 aa)). Residues S355, D430, and H507 each act as charge relay system in the active site.

It belongs to the AB hydrolase superfamily. ABHD16 family.

The protein localises to the membrane. It catalyses the reaction 1-heptadecanoyl-2-(5Z,8Z,11Z,14Z-eicosatetraenoyl)-sn-glycero-3-phosphoserine + H2O = 1-heptadecanoyl-sn-glycero-3-phosphoserine + (5Z,8Z,11Z,14Z)-eicosatetraenoate + H(+). It carries out the reaction 1-hexadecanoyl-2-(9Z-octadecenoyl)-sn-glycero-3-phospho-L-serine + H2O = 1-hexadecanoyl-sn-glycero-3-phospho-L-serine + (9Z)-octadecenoate + H(+). The catalysed reaction is 1-octadecanoyl-2-(9Z,12Z-octadecadienoyl)-sn-glycero-3-phosphoserine + H2O = 1-octadecanoyl-sn-glycero-3-phosphoserine + (9Z,12Z)-octadecadienoate + H(+). The enzyme catalyses 1-heptadecanoyl-2-(5Z,8Z,11Z,14Z-eicosatetraenoyl)-sn-glycero-3-phosphocholine + H2O = 1-heptadecanoyl-sn-glycero-3-phosphocholine + (5Z,8Z,11Z,14Z)-eicosatetraenoate + H(+). It catalyses the reaction 1-hexadecanoyl-2-(9Z-octadecenoyl)-sn-glycero-3-phosphoglycerol + H2O = 1-hexadecanoyl-sn-glycero-3-phosphoglycerol + (9Z)-octadecenoate + H(+). It carries out the reaction 1-hexadecanoyl-2-(9Z-octadecenoyl)-sn-glycero-3-phospho-(1D-myo-inositol) + H2O = 1-hexadecanoyl-sn-glycero-3-phospho-(1D-myo-inositol) + (9Z)-octadecenoate + H(+). The catalysed reaction is 1-heptadecanoyl-2-(5Z,8Z,11Z,14Z-eicosatetraenoyl)-sn-glycero-3-phosphoethanolamine + H2O = 1-heptadecanoyl-sn-glycero-3-phosphoethanolamine + (5Z,8Z,11Z,14Z)-eicosatetraenoate + H(+). The enzyme catalyses 1-hexadecanoyl-2-(9Z-octadecenoyl)-sn-glycero-3-phospho-(1'-sn-glycerol) + H2O = 1-hexadecanoyl-sn-glycero-3-phospho-(1'-sn-glycerol) + (9Z)-octadecenoate + H(+). It catalyses the reaction Hydrolyzes glycerol monoesters of long-chain fatty acids.. It carries out the reaction 1-tetradecanoylglycerol + H2O = tetradecanoate + glycerol + H(+). The catalysed reaction is 2-hexadecanoylglycerol + H2O = glycerol + hexadecanoate + H(+). The enzyme catalyses 1-(9Z-octadecenoyl)-glycerol + H2O = glycerol + (9Z)-octadecenoate + H(+). It catalyses the reaction 2-(9Z-octadecenoyl)-glycerol + H2O = glycerol + (9Z)-octadecenoate + H(+). It carries out the reaction 2-(9Z,12Z-octadecadienoyl)-glycerol + H2O = (9Z,12Z)-octadecadienoate + glycerol + H(+). The catalysed reaction is 1-(5Z,8Z,11Z,14Z-eicosatetraenoyl)-glycerol + H2O = glycerol + (5Z,8Z,11Z,14Z)-eicosatetraenoate + H(+). The enzyme catalyses 2-(5Z,8Z,11Z,14Z-eicosatetraenoyl)-glycerol + H2O = glycerol + (5Z,8Z,11Z,14Z)-eicosatetraenoate + H(+). It catalyses the reaction prostaglandin D2-1-glycerol ester + H2O = prostaglandin D2 + glycerol + H(+). It carries out the reaction 2-glyceryl-15-deoxy-Delta(12,14)-prostaglandin J2 + H2O = 15-deoxy-Delta(12,14)-prostaglandin J2 + glycerol + H(+). The catalysed reaction is 1-(9Z,12Z-octadecadienoyl)-glycerol + H2O = (9Z,12Z)-octadecadienoate + glycerol + H(+). Functionally, phosphatidylserine (PS) lipase that mediates the hydrolysis of phosphatidylserine to generate lysophosphatidylserine (LPS). LPS constitutes a class of signaling lipids that regulates immunological and neurological processes. Has no activity towards diacylglycerol, triacylglycerol or lysophosphatidylserine lipase. Also has monoacylglycerol lipase activity, with preference for 1-(9Z,12Z-octadecadienoyl)-glycerol (1-LG) and 2-glyceryl-15-deoxy-Delta(12,14)-prostaglandin J2 (15d-PGJ(2)-G). The chain is Phosphatidylserine lipase ABHD16A from Pongo abelii (Sumatran orangutan).